A 90-amino-acid chain; its full sequence is MAEFEDTTVFNFGSQKPENVRSMLKLVYEALEEKGYNPINQIVGYLISGDPAYIPRLNDARNLIRRFERDEIVEELVKDYLSDHKTDQKK.

This sequence belongs to the UPF0297 family.

This is UPF0297 protein OEOE_1166 from Oenococcus oeni (strain ATCC BAA-331 / PSU-1).